A 146-amino-acid polypeptide reads, in one-letter code: Acidic phospholipase A2 2 (146 aa).

The N-terminal stretch at 1–21 is a signal peptide; the sequence is MTPAHLLILAAVCVSPLGASS. A propeptide spanning residues 22–27 is cleaved from the precursor; sequence SRPMPL. 7 disulfides stabilise this stretch: C38–C98, C53–C145, C55–C71, C70–C126, C77–C119, C87–C112, and C105–C117. Y54, G56, and G58 together coordinate Ca(2+). Residue H74 is part of the active site. Residue D75 coordinates Ca(2+). Residue D120 is part of the active site.

The protein belongs to the phospholipase A2 family. Group I subfamily. D49 sub-subfamily. The cofactor is Ca(2+). In terms of tissue distribution, expressed by the venom gland.

Its subcellular location is the secreted. The enzyme catalyses a 1,2-diacyl-sn-glycero-3-phosphocholine + H2O = a 1-acyl-sn-glycero-3-phosphocholine + a fatty acid + H(+). PLA2 catalyzes the calcium-dependent hydrolysis of the 2-acyl groups in 3-sn-phosphoglycerides. This Naja atra (Chinese cobra) protein is Acidic phospholipase A2 2.